Reading from the N-terminus, the 93-residue chain is Phosphoribosyl-ATP pyrophosphatase (93 aa).

The protein belongs to the PRA-PH family.

It localises to the cytoplasm. The catalysed reaction is 1-(5-phospho-beta-D-ribosyl)-ATP + H2O = 1-(5-phospho-beta-D-ribosyl)-5'-AMP + diphosphate + H(+). Its pathway is amino-acid biosynthesis; L-histidine biosynthesis; L-histidine from 5-phospho-alpha-D-ribose 1-diphosphate: step 2/9. The polypeptide is Phosphoribosyl-ATP pyrophosphatase (Metallosphaera sedula (strain ATCC 51363 / DSM 5348 / JCM 9185 / NBRC 15509 / TH2)).